The primary structure comprises 354 residues: Probable cinnamyl alcohol dehydrogenase 1 (354 aa).

Positions 47, 69, 70, 100, 103, 106, 114, and 163 each coordinate Zn(2+). Residues Thr167, 188-193 (GLGGLG), 211-216 (STSESK), Thr251, and 297-299 (SVT) contribute to the NADP(+) site.

The protein belongs to the zinc-containing alcohol dehydrogenase family. Homodimer. The cofactor is Zn(2+).

The enzyme catalyses (E)-cinnamyl alcohol + NADP(+) = (E)-cinnamaldehyde + NADPH + H(+). The catalysed reaction is (E)-coniferol + NADP(+) = (E)-coniferaldehyde + NADPH + H(+). It catalyses the reaction (E)-sinapyl alcohol + NADP(+) = (E)-sinapaldehyde + NADPH + H(+). It carries out the reaction (E)-4-coumaroyl alcohol + NADP(+) = (E)-4-coumaraldehyde + NADPH + H(+). The enzyme catalyses (E)-caffeyl alcohol + NADP(+) = (E)-caffeyl aldehyde + NADPH + H(+). Its pathway is aromatic compound metabolism; phenylpropanoid biosynthesis. Involved in lignin biosynthesis. Catalyzes the final step specific for the production of lignin monomers. Catalyzes the NADPH-dependent reduction of coniferaldehyde, 5-hydroxyconiferaldehyde, sinapaldehyde, 4-coumaraldehyde and caffeyl aldehyde to their respective alcohols. The chain is Probable cinnamyl alcohol dehydrogenase 1 from Oryza sativa subsp. japonica (Rice).